We begin with the raw amino-acid sequence, 1235 residues long: Serine/threonine-protein kinase TAO2 (1235 aa).

Position 9 is a phosphoserine (S9). Residues 28-281 (FSDLREIGHG…SEVLLKHRFV (254 aa)) form the Protein kinase domain. ATP is bound by residues 34 to 42 (IGHGSFGAV) and K57. D151 (proton acceptor) is an active-site residue. At S181 the chain carries Phosphoserine. The tract at residues 318-457 (QEAPNGPGAE…TSTTSSARRR (140 aa)) is disordered. A compositionally biased stretch (low complexity) spans 350–374 (SSHSVPSMSISASSQSSSVNSLADA). A compositionally biased stretch (acidic residues) spans 375–393 (SDNEEEEEEEEEEEEEEEG). Residues 394 to 409 (PEAREMAMMQEGEHTV) show a composition bias toward basic and acidic residues. Phosphoserine is present on S414. 2 coiled-coil regions span residues 486–547 (SALR…RRHQ) and 574–601 (KELAALLEAQKRTYKLRKEQLKEELQEN). A Phosphoserine modification is found at S656. Residues 681–713 (LRQHEATRELELRQLQAVQRTRAELTRLQHQTE) are a coiled coil. Disordered stretches follow at residues 732-777 (HAAQ…QPCS), 804-835 (KEGATLEPKQQRILGEESGAPSPSPQKHGSLV), and 891-939 (QGPA…RPCP). The segment covering 766 to 777 (NTGTPIEQQPCS) has biased composition (polar residues). A phosphoserine mark is found at S777, S825, and S827. Positions 899–908 (PEEEEEEEEG) are enriched in acidic residues. Pro residues predominate over residues 924-934 (PDIPPEPPPTH). The next 2 membrane-spanning stretches (helical) occupy residues 965–985 (LLPLLLLLLLPLLAAQGGGGL) and 987–1007 (AALLALEVGLVGLGASYLLLC). Phosphoserine is present on residues H1011 and G1031. Helical transmembrane passes span 1012-1032 (LPSSLFLLLAQGTALGAVLGL), 1043-1063 (LGLGAAWLLAWPGLALPLVAM), and 1166-1186 (QGLASHLPPWAIHTLASWGLL). The segment at 1198–1235 (LPRSQRQLGPPASRQPLPGTLAGRRSRTRQSRALPPWR) is disordered.

The protein belongs to the protein kinase superfamily. STE Ser/Thr protein kinase family. STE20 subfamily. Interacts with MAP2K3 and MAP2K6. Self-associates. Interacts with tubulins through the C-terminal domain. Interacts with MAP3K7 and interferes with MAP3K7-binding to CHUK and thus prevents NF-kappa-B activation. Isoform 2 interacts with PCDH8; this complex may also include CDH2. Mg(2+) is required as a cofactor. Post-translationally, isoforms 1 and 2 are autophosphorylated. In terms of processing, C-terminal cleavage of isoform 1 and subsequent nuclear localization requires CASP9 activity. Autophosphorylated. Phosphorylated by ATM. Post-translationally, phosphorylated on Ser-1031 by MAPK14. This phosphorylation is required PCDH8 for endocytosis. In terms of tissue distribution, ubiquitously expressed, with a higher level of expression in testis and brain.

The protein resides in the cytoplasmic vesicle membrane. The protein localises to the cytoplasm. It localises to the cytoskeleton. It is found in the nucleus. Its subcellular location is the cell projection. The protein resides in the dendrite. It catalyses the reaction L-seryl-[protein] + ATP = O-phospho-L-seryl-[protein] + ADP + H(+). The catalysed reaction is L-threonyl-[protein] + ATP = O-phospho-L-threonyl-[protein] + ADP + H(+). With respect to regulation, selectively inhibited by the enantiopure organoruthenium inhibitor 9E1. Activated following arsenic trioxide (As(2)O(3)) treatment. Serine/threonine-protein kinase involved in different processes such as membrane blebbing and apoptotic bodies formation DNA damage response and MAPK14/p38 MAPK stress-activated MAPK cascade. Phosphorylates itself, MBP, activated MAPK8, MAP2K3, MAP2K6 and tubulins. Activates the MAPK14/p38 MAPK signaling pathway through the specific activation and phosphorylation of the upstream MAP2K3 and MAP2K6 kinases. In response to DNA damage, involved in the G2/M transition DNA damage checkpoint by activating the p38/MAPK14 stress-activated MAPK cascade, probably by mediating phosphorylation of upstream MAP2K3 and MAP2K6 kinases. Isoform 1, but not isoform 2, plays a role in apoptotic morphological changes, including cell contraction, membrane blebbing and apoptotic bodies formation. This function, which requires the activation of MAPK8/JNK and nuclear localization of C-terminally truncated isoform 1, may be linked to the mitochondrial CASP9-associated death pathway. Isoform 1 binds to microtubules and affects their organization and stability independently of its kinase activity. Prevents MAP3K7-mediated activation of CHUK, and thus NF-kappa-B activation, but not that of MAPK8/JNK. May play a role in the osmotic stress-MAPK8 pathway. Isoform 2, but not isoform 1, is required for PCDH8 endocytosis. Following homophilic interactions between PCDH8 extracellular domains, isoform 2 phosphorylates and activates MAPK14/p38 MAPK which in turn phosphorylates isoform 2. This process leads to PCDH8 endocytosis and CDH2 cointernalization. Both isoforms are involved in MAPK14 phosphorylation. The sequence is that of Serine/threonine-protein kinase TAO2 (TAOK2) from Homo sapiens (Human).